A 312-amino-acid polypeptide reads, in one-letter code: Isethionate sulfite-lyase activating enzyme (312 aa).

The region spanning 22–309 (HDGPGIRTIV…VDETRGAVTE (288 aa)) is the Radical SAM core domain. C36, C40, C43, C62, C65, C68, C72, C92, C95, C100, and C104 together coordinate [4Fe-4S] cluster. Residue 42-44 (WCS) coordinates S-adenosyl-L-methionine. 4Fe-4S ferredoxin-type domains follow at residues 53-82 (PQVAYNKGRCIGCHRCIKACEHDAITVNED) and 83-115 (GTLSLDRGKCDVCKTLDCAHACPAQGMIIYGEN). S-adenosyl-L-methionine contacts are provided by residues G144, 193–195 (DVK), and H267.

It belongs to the organic radical-activating enzymes family. Monomer. It depends on [4Fe-4S] cluster as a cofactor.

The enzyme catalyses glycyl-[protein] + reduced [flavodoxin] + S-adenosyl-L-methionine = glycin-2-yl radical-[protein] + semiquinone [flavodoxin] + 5'-deoxyadenosine + L-methionine + H(+). The protein operates within organosulfur degradation; alkanesulfonate degradation. Involved in an anaerobic respiration pathway that converts the sulfonate taurine (2-aminoethanesulfonate) to ammonia, acetate and sulfide. Catalyzes activation of the isethionate sulfite-lyase IslA under anaerobic conditions by generation of an organic free radical on a glycine residue, via a homolytic cleavage of S-adenosyl-L-methionine (SAM). This is Isethionate sulfite-lyase activating enzyme from Bilophila wadsworthia (strain 3_1_6).